The sequence spans 83 residues: Small ribosomal subunit protein bS18 (83 aa).

Belongs to the bacterial ribosomal protein bS18 family. Part of the 30S ribosomal subunit. Forms a tight heterodimer with protein bS6.

In terms of biological role, binds as a heterodimer with protein bS6 to the central domain of the 16S rRNA, where it helps stabilize the platform of the 30S subunit. This Cytophaga hutchinsonii (strain ATCC 33406 / DSM 1761 / CIP 103989 / NBRC 15051 / NCIMB 9469 / D465) protein is Small ribosomal subunit protein bS18.